The chain runs to 347 residues: Phenylalanine--tRNA ligase alpha subunit (347 aa).

Glu-261 contacts Mg(2+).

The protein belongs to the class-II aminoacyl-tRNA synthetase family. Phe-tRNA synthetase alpha subunit type 1 subfamily. As to quaternary structure, tetramer of two alpha and two beta subunits. The cofactor is Mg(2+).

The protein resides in the cytoplasm. The catalysed reaction is tRNA(Phe) + L-phenylalanine + ATP = L-phenylalanyl-tRNA(Phe) + AMP + diphosphate + H(+). The protein is Phenylalanine--tRNA ligase alpha subunit of Streptococcus thermophilus (strain CNRZ 1066).